The primary structure comprises 119 residues: Large ribosomal subunit protein uL14 (119 aa).

This sequence belongs to the universal ribosomal protein uL14 family. Part of the 50S ribosomal subunit. Forms a cluster with proteins L3 and L19. In the 70S ribosome, L14 and L19 interact and together make contacts with the 16S rRNA in bridges B5 and B8.

In terms of biological role, binds to 23S rRNA. Forms part of two intersubunit bridges in the 70S ribosome. The polypeptide is Large ribosomal subunit protein uL14 (Wolbachia sp. subsp. Brugia malayi (strain TRS)).